We begin with the raw amino-acid sequence, 446 residues long: F-box/LRR-repeat protein At4g29420 (446 aa).

An F-box domain is found at 1–51; sequence MDELPPELWIKILSRINDSESLARCRVASKTLNSLSREVRAVNLICTWSRY. LRR repeat units lie at residues 59–84, 103–130, 135–160, 181–206, 223–248, 265–289, 318–343, and 382–407; these read VVTP…SVGV, DLYL…SISD, SCWR…EVKN, FIRL…NLIG, CHWT…KLKC, HLSV…ELVS, QSER…SLSP, and NVHQ…RLMI.

This Arabidopsis thaliana (Mouse-ear cress) protein is F-box/LRR-repeat protein At4g29420.